Reading from the N-terminus, the 284-residue chain is tRNA uridine(34) hydroxylase (284 aa).

Residues Thr132–Tyr226 form the Rhodanese domain. The Cysteine persulfide intermediate role is filled by Cys186.

This sequence belongs to the TrhO family.

The enzyme catalyses uridine(34) in tRNA + AH2 + O2 = 5-hydroxyuridine(34) in tRNA + A + H2O. Its function is as follows. Catalyzes oxygen-dependent 5-hydroxyuridine (ho5U) modification at position 34 in tRNAs. The protein is tRNA uridine(34) hydroxylase of Burkholderia cenocepacia (strain ATCC BAA-245 / DSM 16553 / LMG 16656 / NCTC 13227 / J2315 / CF5610) (Burkholderia cepacia (strain J2315)).